The following is a 525-amino-acid chain: Arylsulfatase G (525 aa).

Positions Met-1–Ser-16 are cleaved as a signal peptide. The Ca(2+) site is built by Asp-44, Asp-45, and Cys-84. Cys-84 (nucleophile) is an active-site residue. 3-oxoalanine (Cys) is present on Cys-84. An N-linked (GlcNAc...) asparagine glycan is attached at Asn-117. Substrate is bound at residue Lys-137. His-139 is a catalytic residue. Ser-162 contributes to the substrate binding site. A glycan (N-linked (GlcNAc...) asparagine) is linked at Asn-215. His-251 lines the substrate pocket. 2 residues coordinate Ca(2+): Asp-302 and Asn-303. N-linked (GlcNAc...) asparagine glycans are attached at residues Asn-356 and Asn-497.

The protein belongs to the sulfatase family. The cofactor is Ca(2+). Post-translationally, N-glycosylated with both high mannose and complex type sugars. The conversion to 3-oxoalanine (also known as C-formylglycine, FGly), of a serine or cysteine residue in prokaryotes and of a cysteine residue in eukaryotes, is critical for catalytic activity. In terms of processing, the 63-kDa precursor undergoes proteolytic processing in two steps, yielding two fragments in the first step (apparent molecular masses of 44 and 18 kDa). In the second step, the 44-kDa fragment is processed further to the 34- and 10-kDa chains. The 10-kDa chain is a cleavage product of the 44-kDa fragment but linked to the 18-kDa chain through a disulfide bridge. In terms of tissue distribution, highly expressed in the spleen, kidney, liver, brain, and testis (at protein level).

The protein localises to the lysosome. It carries out the reaction an aryl sulfate + H2O = a phenol + sulfate + H(+). The enzyme catalyses Hydrolysis of the 3-sulfate groups of the N-sulfo-D-glucosamine 3-O-sulfate units of heparin.. In terms of biological role, displays arylsulfatase activity at acidic pH towards the artificial substrate p-nitrocatechol sulfate. Catalyzes the hydrolysis of the 3-sulfate groups of the N-sulfo-D-glucosamine 3-O-sulfate units of heparin. In Mus musculus (Mouse), this protein is Arylsulfatase G (Arsg).